A 396-amino-acid polypeptide reads, in one-letter code: GDSL esterase/lipase ACHE (396 aa).

A signal peptide spans Met-1 to Asp-31. Residue Ser-49 is the Nucleophile of the active site. Asn-108, Asn-126, Asn-151, Asn-196, and Asn-339 each carry an N-linked (GlcNAc...) asparagine glycan. Catalysis depends on residues Asp-359 and His-362.

Belongs to the 'GDSL' lipolytic enzyme family.

The protein localises to the secreted. Esterase that can hydrolyze acetylthiocholine and propionylthiocholine in vitro. Substrate preference is propionylthiocholine &gt; acetylthiocholine. Possesses extremely low activity against butyrylthiocholine. This Zea mays (Maize) protein is GDSL esterase/lipase ACHE.